The following is a 63-amino-acid chain: Large ribosomal subunit protein bL28 (63 aa).

Belongs to the bacterial ribosomal protein bL28 family.

The polypeptide is Large ribosomal subunit protein bL28 (Clostridium kluyveri (strain NBRC 12016)).